Reading from the N-terminus, the 69-residue chain is DNA gyrase inhibitor YacG (69 aa).

Zn(2+) contacts are provided by C9, C12, C28, and C32. A disordered region spans residues 48 to 69; it reads PVSPDAEDELFSGDLEAPHRGH.

It belongs to the DNA gyrase inhibitor YacG family. As to quaternary structure, interacts with GyrB. Zn(2+) serves as cofactor.

Functionally, inhibits all the catalytic activities of DNA gyrase by preventing its interaction with DNA. Acts by binding directly to the C-terminal domain of GyrB, which probably disrupts DNA binding by the gyrase. In Pseudomonas syringae pv. syringae (strain B728a), this protein is DNA gyrase inhibitor YacG.